Here is a 270-residue protein sequence, read N- to C-terminus: MPGKHQQFQDPEVGCCGKYFLFGFNIVFWVLGALFLAIGLWAWGEKGVLSNISGLTDLGGLDPVWLFVVIGGIMSVLGFAGCIGALRENTFLLKFFSVFLGLIFFLELAAGILAFVFKDWIRDQLNLFINNNVKAYRDDIDLQNLIDFAQEYWSCCGARGPNDWNLNIYFNCTDLNPSRERCGVPFSCCVRDPAEDVLNTQCGYDIRLKLELEQQGSIYTKGCVGQFEKWLQDNLIVVAGVLVAIALLQICGICLAQNLVSDIEAVKANW.

Residues 1-19 (MPGKHQQFQDPEVGCCGKY) are Cytoplasmic-facing. The chain crosses the membrane as a helical span at residues 20–40 (FLFGFNIVFWVLGALFLAIGL). At 41 to 63 (WAWGEKGVLSNISGLTDLGGLDP) the chain is on the extracellular side. N-linked (GlcNAc...) asparagine glycosylation is present at Asn51. Residues 64–84 (VWLFVVIGGIMSVLGFAGCIG) form a helical membrane-spanning segment. Topologically, residues 85-94 (ALRENTFLLK) are cytoplasmic. The chain crosses the membrane as a helical span at residues 95-115 (FFSVFLGLIFFLELAAGILAF). The Extracellular portion of the chain corresponds to 116-234 (VFKDWIRDQL…GQFEKWLQDN (119 aa)). 4 disulfide bridges follow: Cys155/Cys223, Cys156/Cys188, Cys172/Cys182, and Cys189/Cys202. Asn171 carries N-linked (GlcNAc...) asparagine glycosylation. The chain crosses the membrane as a helical span at residues 235 to 255 (LIVVAGVLVAIALLQICGICL). The Cytoplasmic segment spans residues 256 to 270 (AQNLVSDIEAVKANW).

The protein belongs to the tetraspanin (TM4SF) family. Interacts with ADAM10; the interaction influences ADAM10 substrate specificity, endocytosis and turnover.

It localises to the cell membrane. Functionally, part of TspanC8 subgroup, composed of 6 members that interact with the transmembrane metalloprotease ADAM10. This interaction is required for ADAM10 exit from the endoplasmic reticulum and for enzymatic maturation and trafficking to the cell surface as well as substrate specificity. Different TspanC8/ADAM10 complexes have distinct substrates. Seems to regulate VE-cadherin expression in endothelial cells probably through interaction with ADAM10, promoting leukocyte transmigration. The chain is Tetraspanin-17 (Tspan17) from Rattus norvegicus (Rat).